A 320-amino-acid polypeptide reads, in one-letter code: Cytochrome f (320 aa).

The N-terminal stretch at 1-35 is a signal peptide; the sequence is MQTRNTFSWIREEITRSISVSLMIYIITWASISSA. 4 residues coordinate heme: Tyr-36, Cys-56, Cys-59, and His-60. The chain crosses the membrane as a helical span at residues 286–305; it reads VQGLLFFLGSVVLAQIFLVL.

Belongs to the cytochrome f family. In terms of assembly, the 4 large subunits of the cytochrome b6-f complex are cytochrome b6, subunit IV (17 kDa polypeptide, petD), cytochrome f and the Rieske protein, while the 4 small subunits are PetG, PetL, PetM and PetN. The complex functions as a dimer. Requires heme as cofactor. Purified from leaves as a water-soluble monomeric protein with a mass of 28.16 kDa, cleavage occurs after Gln-287 and separates the heme-binding from the membrane.

Its subcellular location is the plastid. The protein resides in the chloroplast thylakoid membrane. Its function is as follows. Component of the cytochrome b6-f complex, which mediates electron transfer between photosystem II (PSII) and photosystem I (PSI), cyclic electron flow around PSI, and state transitions. This is Cytochrome f (petA) from Brassica rapa subsp. rapa (Turnip).